The primary structure comprises 1133 residues: DNA-directed RNA polymerase subunit beta (1133 aa).

Residues 1085–1133 form a disordered region; that stretch reads ADVSSRHTPSRPTYESVTSEDLSPAAGGTFTLARRSREEDEDREEEDDF. The segment covering 1090–1105 has biased composition (polar residues); the sequence is RHTPSRPTYESVTSED. Acidic residues predominate over residues 1123–1133; it reads EDEDREEEDDF.

The protein belongs to the RNA polymerase beta chain family. In terms of assembly, in cyanobacteria the RNAP catalytic core is composed of 2 alpha, 1 beta, 1 beta', 1 gamma and 1 omega subunit. When a sigma factor is associated with the core the holoenzyme is formed, which can initiate transcription.

The catalysed reaction is RNA(n) + a ribonucleoside 5'-triphosphate = RNA(n+1) + diphosphate. DNA-dependent RNA polymerase catalyzes the transcription of DNA into RNA using the four ribonucleoside triphosphates as substrates. The chain is DNA-directed RNA polymerase subunit beta from Synechococcus sp. (strain JA-3-3Ab) (Cyanobacteria bacterium Yellowstone A-Prime).